Consider the following 406-residue polypeptide: COP9 signalosome complex subunit 4 (406 aa).

The PCI domain maps to 197 to 366; it reads YRRKFIEAAQ…GIVHFETREP (170 aa).

It belongs to the CSN4 family. As to quaternary structure, component of the CSN complex, probably composed of cops1, cops2, cops3, cops4, cops5, cops6, cops7, cops8 and cops9.

Its subcellular location is the cytoplasm. The protein resides in the nucleus. It is found in the cytoplasmic vesicle. It localises to the secretory vesicle. The protein localises to the synaptic vesicle. Component of the COP9 signalosome complex (CSN), a complex involved in various cellular and developmental processes. The CSN complex is an essential regulator of the ubiquitin (Ubl) conjugation pathway by mediating the deneddylation of the cullin subunits of E3 ligase complexes, leading to modify the Ubl ligase activity. In Danio rerio (Zebrafish), this protein is COP9 signalosome complex subunit 4 (cops4).